The sequence spans 263 residues: Syntaxin pep12 (263 aa).

Residues Arg140 to Lys159 form a disordered region. A compositionally biased stretch (polar residues) spans Val142 to Lys159. Phosphoserine occurs at positions 148 and 163. Positions Gln169–Ala231 constitute a t-SNARE coiled-coil homology domain.

It belongs to the syntaxin family.

The protein resides in the endoplasmic reticulum. Has a role in vesicle-mediated transport but not with protein transport from Golgi to vesicle. This Schizosaccharomyces pombe (strain 972 / ATCC 24843) (Fission yeast) protein is Syntaxin pep12 (pep12).